The sequence spans 736 residues: Prospero homeobox protein 1 (736 aa).

Residues 103 to 135 (KNGGTEPSFQASGLSSTGSEVHQEDVCSNSSRD) are compositionally biased toward polar residues. Residues 103-146 (KNGGTEPSFQASGLSSTGSEVHQEDVCSNSSRDSPQECLSPFGR) are disordered. A Nuclear localization signal motif is present at residues 163–168 (RAKRAR). 5 disordered regions span residues 180–220 (PRVA…QQQS), 261–301 (YDST…EMCE), 319–344 (EIGE…HPEG), 445–465 (NSSD…SLHQ), and 499–518 (PSAS…DLTR). Acidic residues predominate over residues 264–274 (TDSENDEDGNL). Basic and acidic residues predominate over residues 319–335 (EIGENKPKREGPKEKDQ). Residues 450–460 (PASAPPAGGHH) show a composition bias toward low complexity. Over residues 505 to 518 (GKERASPESLDLTR) the composition is skewed to basic and acidic residues. Residues 576 to 634 (QEGLSPNHLKKAKLMFFYTRYPSSNMLKTYFSDVKFNRCITSQLIKWFSNFREFYYIQM) form the Prospero-type homeo domain. The segment at 576 to 734 (QEGLSPNHLK…KSPNCLQELL (159 aa)) is homeo-Prospero. The 100-residue stretch at 635–734 (EKYARQAIND…KSPNCLQELL (100 aa)) folds into the Prospero domain.

The protein belongs to the Prospero homeodomain family. Expressed most actively in the developing lens and midgut and at lower levels in the developing brain, heart, muscle and retina.

The protein resides in the nucleus. Functionally, transcription factor which may be involved in developmental processes such as cell fate determination, gene transcriptional regulation and progenitor cell regulation in a number of organs. May be essential in the development and function of the eye. May play a role in the regulation of the circadian rhythm by repressing the expression of clock genes. This Gallus gallus (Chicken) protein is Prospero homeobox protein 1 (PROX1).